The primary structure comprises 139 residues: ATP synthase epsilon chain 2 (139 aa).

This sequence belongs to the ATPase epsilon chain family. F-type ATPases have 2 components, CF(1) - the catalytic core - and CF(0) - the membrane proton channel. CF(1) has five subunits: alpha(3), beta(3), gamma(1), delta(1), epsilon(1). CF(0) has three main subunits: a, b and c.

It is found in the cell inner membrane. In terms of biological role, produces ATP from ADP in the presence of a proton gradient across the membrane. In Ralstonia nicotianae (strain ATCC BAA-1114 / GMI1000) (Ralstonia solanacearum), this protein is ATP synthase epsilon chain 2 (atpC2).